The chain runs to 719 residues: Putative alpha-1,3-mannosyltransferase MNT4 (719 aa).

Topologically, residues 1-4 (MKFH) are cytoplasmic. Residues 5-22 (LKRYVIVTSILLSFFLLF) traverse the membrane as a helical segment. Topologically, residues 23 to 719 (RRQFLPLTQR…KKLIEIWLQD (697 aa)) are lumenal. N-linked (GlcNAc...) asparagine glycans are attached at residues N148, N273, and N449.

It belongs to the MNN1/MNT family.

It is found in the golgi apparatus membrane. Its pathway is protein modification; protein glycosylation. Responsible for addition of the terminal mannose residues to the outer chain of core N-linked polysaccharides and to O-linked mannotriose. Implicated in late Golgi modifications. This Candida albicans (strain SC5314 / ATCC MYA-2876) (Yeast) protein is Putative alpha-1,3-mannosyltransferase MNT4 (MNT4).